Consider the following 105-residue polypeptide: Small ribosomal subunit protein uS10 (105 aa).

It belongs to the universal ribosomal protein uS10 family. In terms of assembly, part of the 30S ribosomal subunit.

In terms of biological role, involved in the binding of tRNA to the ribosomes. In Thermus thermophilus (strain ATCC BAA-163 / DSM 7039 / HB27), this protein is Small ribosomal subunit protein uS10.